The primary structure comprises 225 residues: Platelet-derived growth factor subunit B (225 aa).

The signal sequence occupies residues 1–12; sequence LPLCCYLRLVSA. Residues 13 to 73 constitute a propeptide, removed in mature form; it reads EGDPIPEELY…ESESSSRGRR (61 aa). Asn-55 carries an N-linked (GlcNAc...) asparagine glycan. Intrachain disulfides connect Cys-89–Cys-133, Cys-122–Cys-170, and Cys-126–Cys-172. A propeptide spans 183–225 (removed in mature form); sequence RSPGTSREHRAKTPQTRVTVRTVRIRRPPKGKHRKFKHTHDKK.

Belongs to the PDGF/VEGF growth factor family. As to quaternary structure, antiparallel homodimer; disulfide-linked. Antiparallel heterodimer with PDGFA; disulfide-linked. The PDGFB homodimer interacts with PDGFRA and PDGFRB homodimers, and with heterodimers formed by PDGFRA and PDGFRB. The heterodimer composed of PDGFA and PDGFB interacts with PDGFRB homodimers, and with heterodimers formed by PDGFRA and PDGFRB. Interacts with XLKD1. Interacts with LRP1. Interacts with SORL1 (via the N-terminal ectodomain). Interacts with CD82; this interaction inhibits PDGFB-mediated signaling pathway. In terms of tissue distribution, expressed in a distinct subpopulation of smooth muscle cells in injured arteries.

The protein resides in the secreted. Growth factor that plays an essential role in the regulation of embryonic development, cell proliferation, cell migration, survival and chemotaxis. Potent mitogen for cells of mesenchymal origin. Required for normal proliferation and recruitment of pericytes and vascular smooth muscle cells in the central nervous system, skin, lung, heart and placenta. Required for normal blood vessel development, and for normal development of kidney glomeruli. Plays an important role in wound healing. Signaling is modulated by the formation of heterodimers with PDGFA. The polypeptide is Platelet-derived growth factor subunit B (Pdgfb) (Rattus norvegicus (Rat)).